Consider the following 628-residue polypeptide: Probable alpha-L-arabinofuranosidase A (628 aa).

Positions 1–25 (MVAFSALSGVSAVSLLLSLVQNAHG) are cleaved as a signal peptide. N-linked (GlcNAc...) asparagine glycans are attached at residues Asn-36, Asn-51, Asn-74, Asn-152, Asn-171, Asn-260, Asn-359, Asn-440, Asn-493, and Asn-610.

Belongs to the glycosyl hydrolase 51 family.

The protein resides in the secreted. It catalyses the reaction Hydrolysis of terminal non-reducing alpha-L-arabinofuranoside residues in alpha-L-arabinosides.. It participates in glycan metabolism; L-arabinan degradation. In terms of biological role, alpha-L-arabinofuranosidase involved in the degradation of arabinoxylan, a major component of plant hemicellulose. Acts only on small linear 1,5-alpha-linked L-arabinofuranosyl oligosaccharides. This chain is Probable alpha-L-arabinofuranosidase A (abfA), found in Aspergillus niger (strain ATCC MYA-4892 / CBS 513.88 / FGSC A1513).